The sequence spans 878 residues: Alanine--tRNA ligase (878 aa).

Residues His562, His566, Cys670, and His674 each contribute to the Zn(2+) site.

This sequence belongs to the class-II aminoacyl-tRNA synthetase family. Zn(2+) is required as a cofactor.

Its subcellular location is the cytoplasm. It carries out the reaction tRNA(Ala) + L-alanine + ATP = L-alanyl-tRNA(Ala) + AMP + diphosphate. Catalyzes the attachment of alanine to tRNA(Ala) in a two-step reaction: alanine is first activated by ATP to form Ala-AMP and then transferred to the acceptor end of tRNA(Ala). Also edits incorrectly charged Ser-tRNA(Ala) and Gly-tRNA(Ala) via its editing domain. In Acinetobacter baumannii (strain ACICU), this protein is Alanine--tRNA ligase.